The primary structure comprises 389 residues: Protein DDI1 homolog 1 (389 aa).

Residues 109 to 132 (SSSSAQSAQRTRRVEQDDEGEKSM) are disordered. Asp261 is an active-site residue.

Belongs to the DDI1 family. Expressed in most tissues.

The protein localises to the cytoplasm. It localises to the nucleus. Aspartic protease. Required for the cleavage and activation of transcription factors such as isoform a of the transcription factor skn-1, which in turn regulates the expression of proteasomal subunits such as rpt-3. Plays a key role in the degradation of the potassium channel slo-1, perhaps acting directly, in cleaving slo-1 upstream of the ER-associated degradation pathway (ERAD), and also indirectly, via activation of the transcription factor skn-1, which mediates proteasomal homeostasis. In Caenorhabditis elegans, this protein is Protein DDI1 homolog 1.